Consider the following 320-residue polypeptide: Cytochrome f (320 aa).

Residues 1–35 (MENKNTFSWVKEQMTRSISVSIMIYVITQTSISNA) form the signal peptide. Heme is bound by residues Tyr-36, Cys-56, Cys-59, and His-60. A helical transmembrane segment spans residues 286–306 (VQGLLFFFASVILAQVFLVLK).

It belongs to the cytochrome f family. In terms of assembly, the 4 large subunits of the cytochrome b6-f complex are cytochrome b6, subunit IV (17 kDa polypeptide, petD), cytochrome f and the Rieske protein, while the 4 small subunits are PetG, PetL, PetM and PetN. The complex functions as a dimer. Heme is required as a cofactor.

It is found in the plastid. It localises to the chloroplast thylakoid membrane. Its function is as follows. Component of the cytochrome b6-f complex, which mediates electron transfer between photosystem II (PSII) and photosystem I (PSI), cyclic electron flow around PSI, and state transitions. This Lolium perenne (Perennial ryegrass) protein is Cytochrome f.